The chain runs to 394 residues: Na(+)/H(+) antiporter NhaA (394 aa).

The next 11 membrane-spanning stretches (helical) occupy residues 14-34, 59-79, 95-115, 125-145, 154-174, 179-199, 213-233, 254-274, 292-312, 328-348, and 363-383; these read AGGL…NSAL, LLLW…GLEV, VFPA…YLLF, GWAI…ALLG, VFLL…IALF, VSLQ…YMNW, LVLW…GVIV, GLHP…NAGV, IATG…WLAV, IFAV…IASL, and LGIL…LRLV.

Belongs to the NhaA Na(+)/H(+) (TC 2.A.33) antiporter family.

It localises to the cell inner membrane. It carries out the reaction Na(+)(in) + 2 H(+)(out) = Na(+)(out) + 2 H(+)(in). Na(+)/H(+) antiporter that extrudes sodium in exchange for external protons. The sequence is that of Na(+)/H(+) antiporter NhaA from Yersinia pseudotuberculosis serotype IB (strain PB1/+).